A 132-amino-acid chain; its full sequence is Small ribosomal subunit protein uS8 (132 aa).

The protein belongs to the universal ribosomal protein uS8 family. In terms of assembly, part of the 30S ribosomal subunit. Contacts proteins S5 and S12.

Functionally, one of the primary rRNA binding proteins, it binds directly to 16S rRNA central domain where it helps coordinate assembly of the platform of the 30S subunit. The sequence is that of Small ribosomal subunit protein uS8 from Ehrlichia chaffeensis (strain ATCC CRL-10679 / Arkansas).